We begin with the raw amino-acid sequence, 63 residues long: Large ribosomal subunit protein bL28 (63 aa).

The disordered stretch occupies residues 1–21; the sequence is MSRRDDLTGKGPMFGNNRSHA.

This sequence belongs to the bacterial ribosomal protein bL28 family.

The chain is Large ribosomal subunit protein bL28 from Mycoplasmopsis pulmonis (strain UAB CTIP) (Mycoplasma pulmonis).